A 317-amino-acid polypeptide reads, in one-letter code: Melanocyte-stimulating hormone receptor (317 aa).

Residues 1–37 (MRVQGSQRRLLGSLNSTPTATPHLGLAANQTGARCLE) lie on the Extracellular side of the membrane. Asparagine 29 carries N-linked (GlcNAc...) asparagine glycosylation. Residues 38–63 (VSIPDGLFLSLGLVSLVENVLVVTAI) traverse the membrane as a helical segment. Over 64–72 (AKNRNLHSP) the chain is Cytoplasmic. A helical membrane pass occupies residues 73–93 (MYCFICCLALSDLLVSGSNML). Residues 94 to 118 (ETAVTLLLEAGALAARAAVVQQLDN) lie on the Extracellular side of the membrane. The helical transmembrane segment at 119-140 (VIDVITCSSMLSSLCFLGAIAV) threads the bilayer. The Cytoplasmic portion of the chain corresponds to 141 to 163 (DRYISIFYALRYHSIVTLPRARR). The helical transmembrane segment at 164-183 (AIAAIWVASVLCSTLFIAYY) threads the bilayer. Over 184–191 (DHAAVLLC) the chain is Extracellular. The chain crosses the membrane as a helical span at residues 192–211 (LVVFFLAMLVLMAVLYVHML). The Cytoplasmic portion of the chain corresponds to 212–240 (ARACQHAQGIARLHKRQRLAHQGFGLKGA). A helical membrane pass occupies residues 241–266 (ATLTILLGIFFLCWGPFFLHLTLIVL). Residues 267 to 279 (CPQHPTCSCIFKN) are Extracellular-facing. Residues 280–300 (FNLFLALIICNAIIDPLIYAF) traverse the membrane as a helical segment. The Cytoplasmic segment spans residues 301–317 (RSQELRRTLKEVLLCSW). Cysteine 315 carries S-palmitoyl cysteine lipidation.

It belongs to the G-protein coupled receptor 1 family. As to quaternary structure, interacts with MGRN1, but does not undergo MGRN1-mediated ubiquitination; this interaction competes with GNAS-binding and thus inhibits agonist-induced cAMP production. Interacts with OPN3; the interaction results in a decrease in MC1R-mediated cAMP signaling and ultimately a decrease in melanin production in melanocytes.

The protein resides in the cell membrane. Functionally, receptor for MSH (alpha, beta and gamma) and ACTH. The activity of this receptor is mediated by G proteins which activate adenylate cyclase. Mediates melanogenesis, the production of eumelanin (black/brown) and phaeomelanin (red/yellow), via regulation of cAMP signaling in melanocytes. The protein is Melanocyte-stimulating hormone receptor (MC1R) of Macaca nigra (Celebes black macaque).